The primary structure comprises 525 residues: Probable bifunctional tRNA threonylcarbamoyladenosine biosynthesis protein (525 aa).

The tract at residues 1–322 (MPEKRVLGIE…FRSDQVEVTW (322 aa)) is kae1. Fe cation is bound by residues His106, His110, and Tyr127. L-threonylcarbamoyladenylate-binding positions include 127-131 (YASGA), Asp159, Gly172, Glu176, and Asn255. Fe cation is bound at residue Asp283. The region spanning 331 to 525 (APGQSETAER…HEIELRGRYL (195 aa)) is the Protein kinase domain. ATP contacts are provided by residues 338 to 346 (AERGAEASV) and Lys355. Asp442 acts as the Proton acceptor; for kinase activity in catalysis.

The protein in the N-terminal section; belongs to the KAE1 / TsaD family. This sequence in the C-terminal section; belongs to the protein kinase superfamily. Tyr protein kinase family. BUD32 subfamily. In terms of assembly, component of the KEOPS complex that consists of Kae1, Bud32, Cgi121 and Pcc1; the whole complex dimerizes. Requires Fe(2+) as cofactor.

The protein resides in the cytoplasm. The enzyme catalyses L-seryl-[protein] + ATP = O-phospho-L-seryl-[protein] + ADP + H(+). The catalysed reaction is L-threonyl-[protein] + ATP = O-phospho-L-threonyl-[protein] + ADP + H(+). It carries out the reaction L-threonylcarbamoyladenylate + adenosine(37) in tRNA = N(6)-L-threonylcarbamoyladenosine(37) in tRNA + AMP + H(+). In terms of biological role, required for the formation of a threonylcarbamoyl group on adenosine at position 37 (t(6)A37) in tRNAs that read codons beginning with adenine. Is a component of the KEOPS complex that is probably involved in the transfer of the threonylcarbamoyl moiety of threonylcarbamoyl-AMP (TC-AMP) to the N6 group of A37. The Kae1 domain likely plays a direct catalytic role in this reaction. The Bud32 domain probably displays kinase activity that regulates Kae1 function. This chain is Probable bifunctional tRNA threonylcarbamoyladenosine biosynthesis protein, found in Methanocorpusculum labreanum (strain ATCC 43576 / DSM 4855 / Z).